A 63-amino-acid chain; its full sequence is Alpha-toxin CsE5 (63 aa).

Residues 2–61 (KDGYPVDSGNCKYECLKDDYCNDLCLERKADKGYCYWGKVSCYCYGLPDNSPTKTSGKCN) form the LCN-type CS-alpha/beta domain. Disulfide bonds link C12/C60, C16/C36, C22/C43, and C26/C45.

This sequence belongs to the long (4 C-C) scorpion toxin superfamily. Sodium channel inhibitor family. Alpha subfamily. Expressed by the venom gland.

It is found in the secreted. Alpha toxins bind voltage-independently at site-3 of sodium channels (Nav) and inhibit the inactivation of the activated channels, thereby blocking neuronal transmission. The chain is Alpha-toxin CsE5 from Centruroides sculpturatus (Arizona bark scorpion).